Reading from the N-terminus, the 191-residue chain is Thymidylate kinase (191 aa).

7–14 (GIDGVGKS) contributes to the ATP binding site.

Belongs to the thymidylate kinase family.

It catalyses the reaction dTMP + ATP = dTDP + ADP. Its function is as follows. Phosphorylation of dTMP to form dTDP in both de novo and salvage pathways of dTTP synthesis. The chain is Thymidylate kinase from Helicobacter acinonychis (strain Sheeba).